The chain runs to 120 residues: Histone H2B (120 aa).

The tract at residues 1 to 26 is disordered; the sequence is MAEPAKKKPKKLPKKDKGQKDIKRKK. Ala2 carries the blocked amino end (Ala) modification. Residues Lys7, Lys10, and Lys11 each carry the N6-acetyllysine modification. Lys115 participates in a covalent cross-link: Glycyl lysine isopeptide (Lys-Gly) (interchain with G-Cter in ubiquitin).

This sequence belongs to the histone H2B family. The nucleosome is a histone octamer containing two molecules each of H2A, H2B, H3 and H4 assembled in one H3-H4 heterotetramer and two H2A-H2B heterodimers. The octamer wraps approximately 147 bp of DNA. Can be acetylated to form H2BK6ac, H2BK33ac and H2BK34ac. Post-translationally, monoubiquitinated to form H2BK143ub1; may give a specific tag for epigenetic transcriptional activation.

It is found in the nucleus. Its subcellular location is the chromosome. Functionally, core component of nucleosome. Nucleosomes wrap and compact DNA into chromatin, limiting DNA accessibility to the cellular machineries which require DNA as a template. Histones thereby play a central role in transcription regulation, DNA repair, DNA replication and chromosomal stability. DNA accessibility is regulated via a complex set of post-translational modifications of histones, also called histone code, and nucleosome remodeling. This chain is Histone H2B, found in Pisum sativum (Garden pea).